Reading from the N-terminus, the 462-residue chain is Asparagine--tRNA ligase (462 aa).

The protein belongs to the class-II aminoacyl-tRNA synthetase family. As to quaternary structure, homodimer.

The protein resides in the cytoplasm. The catalysed reaction is tRNA(Asn) + L-asparagine + ATP = L-asparaginyl-tRNA(Asn) + AMP + diphosphate + H(+). This chain is Asparagine--tRNA ligase, found in Thermosynechococcus vestitus (strain NIES-2133 / IAM M-273 / BP-1).